A 165-amino-acid chain; its full sequence is Transcription elongation factor A protein-like 1 (165 aa).

Residues Met1–His101 form a disordered region. A compositionally biased stretch (acidic residues) spans Cys33 to Leu60.

This sequence belongs to the TFS-II family. TFA subfamily.

The protein localises to the nucleus. In terms of biological role, may be involved in transcriptional regulation. Modulates various viral and cellular promoters in a promoter context-dependent manner. Does not bind DNA directly. The protein is Transcription elongation factor A protein-like 1 of Mus musculus (Mouse).